A 296-amino-acid polypeptide reads, in one-letter code: LysM and putative peptidoglycan-binding domain-containing protein 4 (296 aa).

The Extracellular portion of the chain corresponds to 1 to 217 (MRHEELLTKT…PMDGADCGIQ (217 aa)). A disordered region spans residues 29–67 (KNGSGDSGDSSEEESHRVVLRPRGKERHKSGVHQPPQAG). A glycan (N-linked (GlcNAc...) asparagine) is linked at N30. Basic residues predominate over residues 46–59 (VVLRPRGKERHKSG). One can recognise a LysM domain in the interval 74 to 118 (LQRELAQEDSLNKLALQYGCKVADIKKVNNFIREQDLYALKSVKI). Residues 218-238 (WWNAVFIMLLIGIVLPVFYLV) traverse the membrane as a helical segment. The Cytoplasmic segment spans residues 239 to 296 (YFKIQASGETPNSLNTTVIPNGSMAMGTVPGQAPRLAVAVPAVTSADSQFSQTTQAGS).

The protein resides in the membrane. The sequence is that of LysM and putative peptidoglycan-binding domain-containing protein 4 (LYSMD4) from Homo sapiens (Human).